The chain runs to 194 residues: 13S globulin basic chain (194 aa).

Residues 13–162 (ENIKSPQEAD…SFQISSEEAE (150 aa)) enclose the Cupin type-1 domain.

Belongs to the 11S seed storage protein (globulins) family. In terms of assembly, hexamer; each subunit is composed of an acidic and a basic chain derived from a single precursor and linked by a disulfide bond. As to expression, cotyledons and endosperm protein bodies.

Functionally, seed storage protein with a relatively high level of Lys and Met. This chain is 13S globulin basic chain, found in Fagopyrum esculentum (Common buckwheat).